Reading from the N-terminus, the 214-residue chain is Peroxiredoxin 2 (214 aa).

The region spanning 1–157 (MKLYQKFPET…LLRITKAMIV (157 aa)) is the Thioredoxin domain. The Cysteine sulfenic acid (-SOH) intermediate role is filled by Cys-45. Arg-120 is a substrate binding site.

It belongs to the peroxiredoxin family. Prx6 subfamily. In terms of assembly, homodecamer. Pentamer of dimers that assemble into a ring structure.

It localises to the cytoplasm. It catalyses the reaction a hydroperoxide + [thioredoxin]-dithiol = an alcohol + [thioredoxin]-disulfide + H2O. In terms of biological role, thiol-specific peroxidase that catalyzes the reduction of hydrogen peroxide and organic hydroperoxides to water and alcohols, respectively. Plays a role in cell protection against oxidative stress by detoxifying peroxides. This is Peroxiredoxin 2 from Sulfuracidifex metallicus (Sulfolobus metallicus).